The chain runs to 55 residues: Putative virulence-regulating protein PA2146 (55 aa).

The interval 1-55 is disordered; the sequence is MAQHQGGKGNFAEDPKRASEAGKKGGQASGGNFKNDPQRASEAGKKGGQRSHGGN. Composition is skewed to basic and acidic residues over residues 11–23 and 36–45; these read FAED…EAGK and DPQRASEAGK.

The protein belongs to the con-10 family.

In terms of biological role, may be involved in the regulation of the production of pyocyanine, one of the major virulence factors secreted by P.aeruginosa, and other virulence factors. The chain is Putative virulence-regulating protein PA2146 from Pseudomonas aeruginosa (strain ATCC 15692 / DSM 22644 / CIP 104116 / JCM 14847 / LMG 12228 / 1C / PRS 101 / PAO1).